Reading from the N-terminus, the 183-residue chain is ADP-ribosylation factor-like protein 1 (183 aa).

G2 is lipidated: N-myristoyl glycine. GTP-binding positions include 25-32, 68-72, and 127-130; these read GLDGAGKT, DLGGQ, and NKQD.

Belongs to the small GTPase superfamily. Arf family. Homodimer. Interacts with IMH1 (via GRIP domain); the interaction is dependent on GTP. Interacts with MON2.

It localises to the golgi apparatus. Its function is as follows. Recruits golgins such as IMH1 to the Golgi. Can bind and hydrolyze GTP. May be involved in trafficking events within the endosomal system. This Saccharomyces cerevisiae (strain ATCC 204508 / S288c) (Baker's yeast) protein is ADP-ribosylation factor-like protein 1 (ARL1).